Here is a 287-residue protein sequence, read N- to C-terminus: Bifunctional protein FolD 2 (287 aa).

Residues Gly166 to Ser168 and Ile232 contribute to the NADP(+) site.

Belongs to the tetrahydrofolate dehydrogenase/cyclohydrolase family. As to quaternary structure, homodimer.

It carries out the reaction (6R)-5,10-methylene-5,6,7,8-tetrahydrofolate + NADP(+) = (6R)-5,10-methenyltetrahydrofolate + NADPH. The enzyme catalyses (6R)-5,10-methenyltetrahydrofolate + H2O = (6R)-10-formyltetrahydrofolate + H(+). Its pathway is one-carbon metabolism; tetrahydrofolate interconversion. Catalyzes the oxidation of 5,10-methylenetetrahydrofolate to 5,10-methenyltetrahydrofolate and then the hydrolysis of 5,10-methenyltetrahydrofolate to 10-formyltetrahydrofolate. The protein is Bifunctional protein FolD 2 of Hydrogenovibrio crunogenus (strain DSM 25203 / XCL-2) (Thiomicrospira crunogena).